The primary structure comprises 1295 residues: Serine protease pet autotransporter (1295 aa).

Positions 1–52 are cleaved as a signal peptide; it reads MNKIYSIKYSAATGGLIAVSELAKKVICKTNRKISAALLSLAVISYTNIIYA. The 251-residue stretch at 54-304 folds into the Peptidase S6 domain; it reads NMDISKAWAR…TPFDSKTTNE (251 aa). Active-site charge relay system residues include His-124, Asp-153, and Ser-260. The 267-residue stretch at 1029-1295 folds into the Autotransporter domain; it reads DINGEAGAWA…AINANFRYSF (267 aa).

Cleaved to release the mature protein from the outer membrane.

It localises to the periplasm. The protein resides in the secreted. It is found in the cell surface. The protein localises to the cell outer membrane. Its activity is regulated as follows. Inhibition of cytotoxic activity by phenylmethylsulfonyl fluoride. Its function is as follows. Serine protease with enterotoxic and cytotoxic activity. Internalization into the host cell is required for the induction of cytopathic effects. However, the serine activity is not necessary for secretion and internalization into the host cell. The chain is Serine protease pet autotransporter (pet) from Escherichia coli O44:H18 (strain 042 / EAEC).